We begin with the raw amino-acid sequence, 380 residues long: Putative heat stress transcription factor B-4a (380 aa).

Residues leucine 216–valine 245 are hydrophobic repeat HR-A/B. Disordered regions lie at residues proline 268–glutamate 296 and isoleucine 314–proline 380. Positions valine 278–glutamate 296 are enriched in low complexity. The Nuclear localization signal motif lies at arginine 346–arginine 348.

It belongs to the HSF family. Class B subfamily. Homotrimer. In terms of processing, exhibits temperature-dependent phosphorylation.

It localises to the nucleus. Transcriptional regulator that specifically binds DNA of heat shock promoter elements (HSE). The polypeptide is Putative heat stress transcription factor B-4a (HSFB4A) (Oryza sativa subsp. japonica (Rice)).